A 556-amino-acid chain; its full sequence is Formate--tetrahydrofolate ligase (556 aa).

Position 65 to 72 (65 to 72) interacts with ATP; the sequence is TPAGEGKT.

It belongs to the formate--tetrahydrofolate ligase family.

It carries out the reaction (6S)-5,6,7,8-tetrahydrofolate + formate + ATP = (6R)-10-formyltetrahydrofolate + ADP + phosphate. It participates in one-carbon metabolism; tetrahydrofolate interconversion. This chain is Formate--tetrahydrofolate ligase, found in Clostridium cylindrosporum.